We begin with the raw amino-acid sequence, 603 residues long: Elongation factor 4 (603 aa).

In terms of domain architecture, tr-type G spans 7–191 (DNIRNFSIVA…AIVTRLPPPK (185 aa)). GTP contacts are provided by residues 19–24 (DHGKST) and 138–141 (NKVD).

It belongs to the TRAFAC class translation factor GTPase superfamily. Classic translation factor GTPase family. LepA subfamily.

It localises to the cell inner membrane. The catalysed reaction is GTP + H2O = GDP + phosphate + H(+). Its function is as follows. Required for accurate and efficient protein synthesis under certain stress conditions. May act as a fidelity factor of the translation reaction, by catalyzing a one-codon backward translocation of tRNAs on improperly translocated ribosomes. Back-translocation proceeds from a post-translocation (POST) complex to a pre-translocation (PRE) complex, thus giving elongation factor G a second chance to translocate the tRNAs correctly. Binds to ribosomes in a GTP-dependent manner. This is Elongation factor 4 from Rhodopseudomonas palustris (strain ATCC BAA-98 / CGA009).